Here is a 1633-residue protein sequence, read N- to C-terminus: D-lysergyl-peptide-synthetase subunit 3 (1633 aa).

Positions phenylalanine 80 to arginine 483 are adenylation (A) domain. The Carrier domain maps to glutamate 622–serine 691. The residue at position 654 (serine 654) is an O-(pantetheine 4'-phosphoryl)serine. The segment at proline 836–alanine 1127 is condensation (C) domain. The reductase (R) domain stretch occupies residues valine 1256 to tryptophan 1483.

This sequence belongs to the NRP synthetase family.

Its pathway is alkaloid biosynthesis; ergot alkaloid biosynthesis. D-lysergyl-peptide-synthetase subunit 3; part of the gene cluster that mediates the biosynthesis of fungal ergot alkaloid. DmaW catalyzes the first step of ergot alkaloid biosynthesis by condensing dimethylallyl diphosphate (DMAP) and tryptophan to form 4-dimethylallyl-L-tryptophan. The second step is catalyzed by the methyltransferase easF that methylates 4-dimethylallyl-L-tryptophan in the presence of S-adenosyl-L-methionine, resulting in the formation of 4-dimethylallyl-L-abrine. The catalase easC and the FAD-dependent oxidoreductase easE then transform 4-dimethylallyl-L-abrine to chanoclavine-I which is further oxidized by easD in the presence of NAD(+), resulting in the formation of chanoclavine-I aldehyde. Agroclavine dehydrogenase easG then mediates the conversion of chanoclavine-I aldehyde to agroclavine via a non-enzymatic adduct reaction: the substrate is an iminium intermediate that is formed spontaneously from chanoclavine-I aldehyde in the presence of glutathione. The presence of easA is not required to complete this reaction. Further conversion of agroclavine to paspalic acid is a two-step process involving oxidation of agroclavine to elymoclavine and of elymoclavine to paspalic acid, the second step being performed by the elymoclavine oxidase cloA. Paspalic acid is then further converted to D-lysergic acid. Ergopeptines are assembled from D-lysergic acid and three different amino acids by the D-lysergyl-peptide-synthetases composed each of a monomudular and a trimodular nonribosomal peptide synthetase subunit. LpsB and lpsC encode the monomodular subunits responsible for D-lysergic acid activation and incorporation into the ergopeptine backbone. LpsA1 and A2 subunits encode the trimodular nonribosomal peptide synthetase assembling the tripeptide portion of ergopeptines. LpsA1 is responsible for formation of the major ergopeptine, ergotamine, and lpsA2 for alpha-ergocryptine, the minor ergopeptine of the total alkaloid mixture elaborated by C.purpurea. D-lysergyl-tripeptides are assembled by the nonribosomal peptide synthetases and released as N-(D-lysergyl-aminoacyl)-lactams. Cyclolization of the D-lysergyl-tripeptides is performed by the Fe(2+)/2-ketoglutarate-dependent dioxygenase easH which introduces a hydroxyl group into N-(D-lysergyl-aminoacyl)-lactam at alpha-C of the aminoacyl residue followed by spontaneous condensation with the terminal lactam carbonyl group. The sequence is that of D-lysergyl-peptide-synthetase subunit 3 from Claviceps purpurea (Ergot fungus).